Reading from the N-terminus, the 212-residue chain is uncharacterized protein (212 aa).

Residues 46-198 form the SIS domain; that stretch reads LERVYREKRK…IYSLMTRLGI (153 aa).

Belongs to the SIS family. PHI subfamily.

This is an uncharacterized protein from Aeropyrum pernix (strain ATCC 700893 / DSM 11879 / JCM 9820 / NBRC 100138 / K1).